Consider the following 406-residue polypeptide: Olfactomedin-like protein 3 (406 aa).

The first 21 residues, 1–21 (MGPSAPLLLFFLLSWPGSLQG), serve as a signal peptide directing secretion. A coiled-coil region spans residues 22-101 (QQHHLVEYME…REVDYLETQN (80 aa)). Residues 134-401 (DCSYTISQVR…QIVYKLEMKK (268 aa)) enclose the Olfactomedin-like domain. A disulfide bond links cysteine 135 and cysteine 328. Residue asparagine 248 is glycosylated (N-linked (GlcNAc...) asparagine).

This sequence belongs to the OLFML3 family.

Its subcellular location is the secreted. Secreted scaffold protein that plays an essential role in dorsoventral patterning during early development. Stabilizes axial formation by restricting chordin (CHRD) activity on the dorsal side. Acts by facilitating the association between the tolloid proteases and their substrate chordin (CHRD), leading to enhance chordin (CHRD) degradation. May have matrix-related function involved in placental and embryonic development, or play a similar role in other physiological processes. The sequence is that of Olfactomedin-like protein 3 (Olfml3) from Rattus norvegicus (Rat).